The primary structure comprises 364 residues: MAIVKEITADLIKKSGEKISAGQSTKSEVGTKTYTAQFPTGRASGNDTTEDFQVTDLYKNGLLFTAYNMSSRDSGSLRSMRSNYSSSSSSILRTARNTISSTVSKLSNGLISNNNSGTISKSPIANILLPRSKSDVDTSSHRFNDVQESLISRGGGTATGVLSNIASTAVFGALESITQGIMADNNEQIYTTARSMYGGAENRTKVFTWDLTPRSTEDLMAIINIYQYFNYFSYGETGKSQYAAEIKGYLDDWYRSTLIEPLSPEDAAKNKTLFEKMTSSLTNVLVVSNPTVWMVKNFGATSKFDGKTEIFGPCQIQSIRFDKTPNGNFNGLAIAPNLPSTFTLEITMREIITLNRASLYAGTF.

Homohexamer. The tube first annulus is composed of a gp48 hexameric ring. Interacts with gp54. Part of the baseplate macromolecular complex which consists of gp5, gp5.4, gp27 (central spike complex); gp6, gp25, gp53 (inner baseplate); gp7, gp8 (intermediate baseplate); gp9, gp10, gp11, gp12 (peripheral); gp48 and gp54 (proximal region of the tail tube).

Its subcellular location is the virion. Functionally, baseplate protein that forms, together with gp54, the baseplate-tail tube junction. The tail tube first 2 annuli are formed by gp48 and gp54, which are in continuation of the spike complex. Involved in the tail assembly. Morphogenesis of the baseplate is completed by association of gp48 and gp54, which bind the upper part of the baseplate dome to form the platform for polymerization of the tail tube. In Escherichia coli (Bacteriophage T4), this protein is Baseplate tail-tube junction protein gp48 (48).